The following is a 733-amino-acid chain: DNA-binding protein SATB2 (733 aa).

The segment at 1–47 (MERRSESPCLRDSPDRRSGSPDVKGPPPVKVARLEQNGSPMGARGRP) is disordered. Ser20 carries the post-translational modification Phosphoserine. Glycyl lysine isopeptide (Lys-Gly) (interchain with G-Cter in SUMO2) cross-links involve residues Lys24 and Lys30. Residue Ser39 is modified to Phosphoserine. In terms of domain architecture, CMP spans 57 to 158 (GLMIPVFCVV…VVTLKIQLQS (102 aa)). Lys161 participates in a covalent cross-link: Glycyl lysine isopeptide (Lys-Gly) (interchain with G-Cter in SUMO2). Residues 161-234 (KLEDLPAEQW…WYKKYKKIKV (74 aa)) enclose the CUTL domain. Lys233 is covalently cross-linked (Glycyl lysine isopeptide (Lys-Gly) (interchain with G-Cter in SUMO)). Lys350 is covalently cross-linked (Glycyl lysine isopeptide (Lys-Gly) (interchain with G-Cter in SUMO); alternate). Lys350 is covalently cross-linked (Glycyl lysine isopeptide (Lys-Gly) (interchain with G-Cter in SUMO2); alternate). A DNA-binding region (CUT 1) is located at residues 350 to 437 (KPEPTNSSVE…ERDRIYQDER (88 aa)). The tract at residues 435–473 (DERERSMNPNVSMVSSASSSPSSSRTPQAKTSTPTTDLP) is disordered. A compositionally biased stretch (low complexity) spans 441 to 458 (MNPNVSMVSSASSSPSSS). Ser454 carries the phosphoserine modification. Residues 459–470 (RTPQAKTSTPTT) are compositionally biased toward polar residues. Thr467 bears the Phosphothreonine mark. The segment at residues 473 to 560 (PIKVDGANVN…ERDVIYEEES (88 aa)) is a DNA-binding region (CUT 2). Residue Lys475 forms a Glycyl lysine isopeptide (Lys-Gly) (interchain with G-Cter in SUMO2) linkage. Disordered regions lie at residues 580–617 (QVLH…KPRS) and 691–733 (DEEL…TDQR). Position 594 is a phosphoserine (Ser594). The segment at residues 615-674 (PRSRTKISLEALGILQSFIHDVGLYPDQEAIHTLSAQLDLPKHTIIKFFQNQRYHVKHHG) is a DNA-binding region (homeobox). A compositionally biased stretch (acidic residues) spans 694-708 (LLTESEENDSEEGSE). A compositionally biased stretch (basic and acidic residues) spans 709 to 733 (EMYKVEAEEENADKSKAAPAETDQR). A Glycyl lysine isopeptide (Lys-Gly) (interchain with G-Cter in SUMO2) cross-link involves residue Lys724.

This sequence belongs to the CUT homeobox family. As to quaternary structure, interacts with PIAS1. Interacts with ATF4 and RUNX2; resulting in enhanced DNA binding and transactivation by these transcription factors. Post-translationally, sumoylated by PIAS1. Sumoylation promotes nuclear localization, but represses transcription factor activity. Expressed in cortical neurons that extend axons across the corpus callosum. Also expressed in branchial arches and in cells of the osteoblast lineage, but not in chondrocytes and osteoclasts.

It localises to the nucleus matrix. Its function is as follows. Binds to DNA, at nuclear matrix- or scaffold-associated regions. Thought to recognize the sugar-phosphate structure of double-stranded DNA. Transcription factor controlling nuclear gene expression, by binding to matrix attachment regions (MARs) of DNA and inducing a local chromatin-loop remodeling. Acts as a docking site for several chromatin remodeling enzymes and also by recruiting corepressors (HDACs) or coactivators (HATs) directly to promoters and enhancers. Required for the initiation of the upper-layer neurons (UL1) specific genetic program and for the inactivation of deep-layer neurons (DL) and UL2 specific genes, probably by modulating Bcl11b expression. Repressor of Ctip2 and regulatory determinant of corticocortical connections in the developing cerebral cortex. May play an important role in palate formation. Acts as a molecular node in a transcriptional network regulating skeletal development and osteoblast differentiation. This is DNA-binding protein SATB2 (Satb2) from Mus musculus (Mouse).